Consider the following 635-residue polypeptide: Cationic amino acid transporter 2, vacuolar (635 aa).

Residues 1 to 48 (MGFLVDTQKEGGGHSWGYVRSLVRRKQVDSANGQSHGHQLARALTVPH) lie on the Cytoplasmic side of the membrane. Residues 49–69 (LVAIGVGATIGAGVYILVGTV) traverse the membrane as a helical segment. The Vacuolar segment spans residues 70–76 (AREHSGP). A helical membrane pass occupies residues 77–97 (SLALSFLIAGIAAGLSAFCYA). Over 98 to 108 (ELSSRCPSAGS) the chain is Cytoplasmic. The chain crosses the membrane as a helical span at residues 109–131 (AYHYSYICVGEGVAWIIGWALIL). Residues 132–171 (EYTIGGSAVARGISPNLALIFGGEDGLPAILARHQIPGLD) lie on the Vacuolar side of the membrane. The chain crosses the membrane as a helical span at residues 172-192 (IVVDPCAAILVFVVTGLLCMG). The Cytoplasmic segment spans residues 193–200 (IKESTFAQ). Residues 201-221 (GIVTAVNVCVLLFVIVAGSYL) form a helical membrane-spanning segment. Topologically, residues 222–235 (GFKTGWPGYELPTG) are vacuolar. Residues 236 to 256 (FFPFGVDGMFAGSATVFFAFI) form a helical membrane-spanning segment. At 257-280 (GFDSVASTAEEVRNPQRDLPIGIG) the chain is on the cytoplasmic side. A helical transmembrane segment spans residues 281 to 301 (LALLLCCSLYMMVSIVIVGLI). Residues 302–324 (PYYAMDPDTPISSAFASHDMQWA) lie on the Vacuolar side of the membrane. Residues 325–345 (VYLITLGAVMALCSALMGALL) form a helical membrane-spanning segment. Over 346–376 (PQPRILMAMARDGLLPSIFSDINKRTQVPVK) the chain is Cytoplasmic. A helical membrane pass occupies residues 377–397 (ATVATGLCAATLAFFMDVSQL). A topological domain (vacuolar) is located at residue A398. A helical transmembrane segment spans residues 399 to 419 (GMVSVGTLLAFTMVAISVLIL). Over 420–493 (RYVPPDEQPL…CLVLSEETRR (74 aa)) the chain is Cytoplasmic. The chain crosses the membrane as a helical span at residues 494–514 (IVAGWSIMFTCVGAFLLSYAA). The Vacuolar segment spans residues 515-524 (SSLSFPGLIR). The chain crosses the membrane as a helical span at residues 525 to 545 (YPLCGVGGCLLLAGLIALSSI). Over 546–560 (DQDDARHTFGHSGGY) the chain is Cytoplasmic. A helical transmembrane segment spans residues 561-581 (MCPFVPLLPIICILINMYLLV). At 582 to 585 (NLGS) the chain is on the vacuolar side. Residues 586–606 (ATWARVSVWLLIGVIVYVFYG) traverse the membrane as a helical segment. Residues 607–635 (RKNSSLANAVYVTTAHAEEIYREHEGSLA) lie on the Cytoplasmic side of the membrane.

Belongs to the amino acid-polyamine-organocation (APC) superfamily. Cationic amino acid transporter (CAT) (TC 2.A.3.3) family. As to expression, expressed in roots, stems, flowers, leaves, and siliques.

Its subcellular location is the vacuole membrane. Functionally, permease involved in the transport of the cationic amino acids. The sequence is that of Cationic amino acid transporter 2, vacuolar (CAT2) from Arabidopsis thaliana (Mouse-ear cress).